Reading from the N-terminus, the 251-residue chain is Triosephosphate isomerase (251 aa).

A substrate-binding site is contributed by 9–11 (NWK). Histidine 95 serves as the catalytic Electrophile. Glutamate 167 functions as the Proton acceptor in the catalytic mechanism. Substrate is bound by residues glycine 173, serine 213, and 234-235 (GG). Phosphoserine is present on serine 213.

Belongs to the triosephosphate isomerase family. As to quaternary structure, homodimer.

It localises to the cytoplasm. The catalysed reaction is D-glyceraldehyde 3-phosphate = dihydroxyacetone phosphate. The protein operates within carbohydrate biosynthesis; gluconeogenesis. Its pathway is carbohydrate degradation; glycolysis; D-glyceraldehyde 3-phosphate from glycerone phosphate: step 1/1. In terms of biological role, involved in the gluconeogenesis. Catalyzes stereospecifically the conversion of dihydroxyacetone phosphate (DHAP) to D-glyceraldehyde-3-phosphate (G3P). In Bacillus cereus (strain AH820), this protein is Triosephosphate isomerase.